Reading from the N-terminus, the 122-residue chain is Large ribosomal subunit protein uL18 (122 aa).

Belongs to the universal ribosomal protein uL18 family. Part of the 50S ribosomal subunit; part of the 5S rRNA/L5/L18/L25 subcomplex. Contacts the 5S and 23S rRNAs.

Functionally, this is one of the proteins that bind and probably mediate the attachment of the 5S RNA into the large ribosomal subunit, where it forms part of the central protuberance. The chain is Large ribosomal subunit protein uL18 from Kosmotoga olearia (strain ATCC BAA-1733 / DSM 21960 / TBF 19.5.1).